Consider the following 731-residue polypeptide: MEVRGLQPKRQKTFARKHLVIVESPAKAQTIEKYLGTQYVVRASMGHVIDLPKSRLAIDIEHDFQPEYITVRGRAQCLKELRTLSKQSLQVFLASDRDREGEAIAYHLAQSIQAYCDTPIKRIVFNEITPHAIRAAIGHPVPIDTAKVNAQKARRVLDRLVGYHLCPLLWHKVKNGLSAGRVQSVALRLICEREVEVKRFVPEEYWTVEGTFEKDKKSFSALLILIQGKKAVFKSKQEATSAIGLFSQSEARVSQIRSFEKNVRPKQPFTTSTLQQCAANRLGFTSRKTMQVAQQLYEGVSLGTHRVGLITYMRTDSVRVSEAAVKEVRAWIATHFSDALPGTPNRYAAKGKSQDAHEAIRPTYVAHTPERIKAHLTRDQIRLYTLIWERFVASQMTDARVRSLTFEITAGPAVFSATETQVIEQGFYRVLKMLSPKDLSKAVLPPTKEGEVVALHNVQSVQHFTQGPVRYTDASIVKMLEEKGIGRPSTYAPTISVLLDRYYVTRIQKQLMPTPLGKVISDLLTTYFHDVVDVSFTARMESKLDEVEEDKIKWNCVIADFYPAFSEKVSTVMKDLNSMRGVFDEKTDVVCSQCGDTMVKKLGRFGFFLACGKFPECRNTQPVPLAKCPRPACDGNIVGKKTRGRKEFYGCTRFPVCDFVTHFKPTFAVCPQCRCFLVEKSNRRVGTYTACVNPECRYVSPTRKNLSLGKEAVLDGSHRGAQDKGAVQHYE.

The Toprim domain maps to 17 to 130; the sequence is KHLVIVESPA…KRIVFNEITP (114 aa). Mg(2+) contacts are provided by Glu-23 and Asp-96. Positions 144 to 569 constitute a Topo IA-type catalytic domain; it reads DTAKVNAQKA…DFYPAFSEKV (426 aa). Residues 178-183 are interaction with DNA; the sequence is SAGRVQ. The active-site O-(5'-phospho-DNA)-tyrosine intermediate is Tyr-312. 3 consecutive C4-type zinc fingers follow at residues 591–617, 628–657, and 670–696; these read CSQC…FPEC, CPRP…FPVC, and CPQC…NPEC.

The protein belongs to the type IA topoisomerase family. Monomer. The cofactor is Mg(2+).

It catalyses the reaction ATP-independent breakage of single-stranded DNA, followed by passage and rejoining.. Functionally, releases the supercoiling and torsional tension of DNA, which is introduced during the DNA replication and transcription, by transiently cleaving and rejoining one strand of the DNA duplex. Introduces a single-strand break via transesterification at a target site in duplex DNA. The scissile phosphodiester is attacked by the catalytic tyrosine of the enzyme, resulting in the formation of a DNA-(5'-phosphotyrosyl)-enzyme intermediate and the expulsion of a 3'-OH DNA strand. The free DNA strand then undergoes passage around the unbroken strand, thus removing DNA supercoils. Finally, in the religation step, the DNA 3'-OH attacks the covalent intermediate to expel the active-site tyrosine and restore the DNA phosphodiester backbone. The chain is DNA topoisomerase 1 from Treponema pallidum (strain Nichols).